The sequence spans 1693 residues: Putative stoned B-like protein (1693 aa).

Over residues 1–12 (MSWRDRDFDPHG) the composition is skewed to basic and acidic residues. 7 disordered regions span residues 1–54 (MSWR…ELPA), 222–322 (NQIP…VEKS), 334–371 (TVEI…PTFS), 383–438 (KEMT…DPNA), 585–807 (GDYH…TSAA), 841–869 (KKME…DEED), and 899–1024 (PVKE…FVAD). Positions 26–39 (SSSERAASMRAMRS) are enriched in low complexity. Composition is skewed to basic and acidic residues over residues 279 to 301 (MEDK…KEET) and 311 to 322 (TTEKHQNEVEKS). Positions 360–371 (EEEEDDDLPTFS) are enriched in acidic residues. Basic and acidic residues predominate over residues 393–412 (ENVENEKQEDTHISEGHVEY). The span at 596-615 (DENSTSAISGYEQNGASTSL) shows a compositional bias: polar residues. Positions 632–643 (YYQGQEYQQEYY) are enriched in low complexity. The DPF 1 motif lies at 684 to 686 (DPF). A compositionally biased stretch (low complexity) spans 708–722 (SPTPEASSSTGTSAP). The segment covering 745–760 (PPRPPPAARPPPPRPA) has biased composition (pro residues). Positions 786–807 (KVSTAVKSTESTLKNLEETSAA) are enriched in polar residues. A compositionally biased stretch (basic and acidic residues) spans 899-913 (PVKEIKKAPEIRRVD). 3 short sequence motifs (DPF) span residues 1006 to 1008 (DPF), 1024 to 1026 (DPF), and 1039 to 1041 (DPF). The tract at residues 1062–1095 (ANAENEDDFYNGRQSPTLSTPTPEGGSPISQQRP) is disordered. Residues 1073-1095 (GRQSPTLSTPTPEGGSPISQQRP) show a composition bias toward polar residues. The 148-residue stretch at 1136–1283 (GWDLMVRHPI…KCKITRTAKP (148 aa)) folds into the SHD domain. An MHD domain is found at 1287–1606 (QDEVQIHCYD…AKYQYKVEID (320 aa)). Residues 1633–1693 (ELHQPTFNPS…IQIDMKNYGY (61 aa)) are disordered. The span at 1637-1651 (PTFNPSTQESDTQQG) shows a compositional bias: polar residues.

Belongs to the Stoned B family.

It localises to the cytoplasm. Functionally, potential adapter protein, which may be involved in endocytic vesicle recycling of synaptic vesicles. The sequence is that of Putative stoned B-like protein (unc-41) from Caenorhabditis elegans.